Here is an 89-residue protein sequence, read N- to C-terminus: Small ribosomal subunit protein uS15 (89 aa).

The protein belongs to the universal ribosomal protein uS15 family. As to quaternary structure, part of the 30S ribosomal subunit. Forms a bridge to the 50S subunit in the 70S ribosome, contacting the 23S rRNA.

One of the primary rRNA binding proteins, it binds directly to 16S rRNA where it helps nucleate assembly of the platform of the 30S subunit by binding and bridging several RNA helices of the 16S rRNA. Functionally, forms an intersubunit bridge (bridge B4) with the 23S rRNA of the 50S subunit in the ribosome. The chain is Small ribosomal subunit protein uS15 from Gloeothece citriformis (strain PCC 7424) (Cyanothece sp. (strain PCC 7424)).